The following is a 279-amino-acid chain: Large ribosomal subunit protein uL2 (279 aa).

The segment at V223–R279 is disordered. Residues R270–R279 show a composition bias toward basic residues.

This sequence belongs to the universal ribosomal protein uL2 family. Part of the 50S ribosomal subunit. Forms a bridge to the 30S subunit in the 70S ribosome.

Functionally, one of the primary rRNA binding proteins. Required for association of the 30S and 50S subunits to form the 70S ribosome, for tRNA binding and peptide bond formation. It has been suggested to have peptidyltransferase activity; this is somewhat controversial. Makes several contacts with the 16S rRNA in the 70S ribosome. This Rhodospirillum rubrum (strain ATCC 11170 / ATH 1.1.1 / DSM 467 / LMG 4362 / NCIMB 8255 / S1) protein is Large ribosomal subunit protein uL2.